Consider the following 1007-residue polypeptide: Probable beta-galactosidase A (1007 aa).

Residues 1–18 (MRLLPVWTAALLAAQAAG) form the signal peptide. Tyrosine 96, asparagine 140, alanine 141, and glutamate 142 together coordinate substrate. Residue asparagine 156 is glycosylated (N-linked (GlcNAc...) asparagine). Asparagine 199 is a binding site for substrate. Glutamate 200 (proton donor) is an active-site residue. A disulfide bond links cysteine 205 and cysteine 206. Residue tyrosine 260 coordinates substrate. The cysteines at positions 266 and 315 are disulfide-linked. Residue glutamate 298 is the Nucleophile of the active site. Tyrosine 364 provides a ligand contact to substrate. 6 N-linked (GlcNAc...) asparagine glycosylation sites follow: asparagine 405, asparagine 422, asparagine 621, asparagine 740, asparagine 775, and asparagine 914.

Belongs to the glycosyl hydrolase 35 family.

It localises to the secreted. It carries out the reaction Hydrolysis of terminal non-reducing beta-D-galactose residues in beta-D-galactosides.. Functionally, cleaves beta-linked terminal galactosyl residues from gangliosides, glycoproteins, and glycosaminoglycans. The sequence is that of Probable beta-galactosidase A (lacA) from Emericella nidulans (strain FGSC A4 / ATCC 38163 / CBS 112.46 / NRRL 194 / M139) (Aspergillus nidulans).